Here is a 462-residue protein sequence, read N- to C-terminus: Glycine--tRNA ligase (462 aa).

Substrate is bound by residues arginine 100 and glutamate 174. ATP-binding positions include 206 to 208, 216 to 221, 290 to 291, and 334 to 337; these read RNE, FRTREF, EL, and GADR. 221-225 contributes to the substrate binding site; it reads FEQME. 330-334 provides a ligand contact to substrate; sequence EPSLG.

Belongs to the class-II aminoacyl-tRNA synthetase family. Homodimer.

It is found in the cytoplasm. It carries out the reaction tRNA(Gly) + glycine + ATP = glycyl-tRNA(Gly) + AMP + diphosphate. Catalyzes the attachment of glycine to tRNA(Gly). In Ruminiclostridium cellulolyticum (strain ATCC 35319 / DSM 5812 / JCM 6584 / H10) (Clostridium cellulolyticum), this protein is Glycine--tRNA ligase.